Reading from the N-terminus, the 414-residue chain is MALKKFLEDIEHHFEPGGKHEKWFALYEAVATVFYTPGIVTNKSSHVRDSVDLKRIMIMVWFAVFPAMFWGMYNAGGQAIAALNHMYAGDQLATVISGNWHYWLTEMLGGTIAADAGVGSKMLLGATYFLPIYATVFLVGGFWEVLFCMVRKHEVNEGFFVTSILFALIVPPTLPLWQAALGITFGVVVAKEIFGGTGRNFLNPALAGRAFLFFAYPAQISGDVVWTAADGFSGATALSQWAQGGNGALVNTVTGSPITWMDAFIGNIPGSIGEVSTLALMIGAAMIVYMRIASWRIIAGVMIGMIAVSTLFNVIGSDTNPMFNMPWHWHLVLGGFAFGMFFMATDPVSASFTNKGKWWYGILIGAMCVMIRVVNPAYPEGMMLAILFANLFAPLFDHVVIEKNIKRRLARYGK.

The next 3 membrane-spanning stretches (helical) occupy residues I56–G76, F129–M149, and I164–T184. An FMN phosphoryl threonine modification is found at T236. 5 helical membrane passes run I268–V288, I297–S317, M325–T345, W358–Y378, and G381–I401.

The protein belongs to the NqrB/RnfD family. Composed of six subunits; NqrA, NqrB, NqrC, NqrD, NqrE and NqrF. FMN is required as a cofactor.

It is found in the cell inner membrane. The catalysed reaction is a ubiquinone + n Na(+)(in) + NADH + H(+) = a ubiquinol + n Na(+)(out) + NAD(+). This reaction is tightly coupled to the Na(+) pumping activity and specifically requires Na(+) for activity. Inhibited by korormicin and 2-N-heptyl-4-hydroxyquinoline N-oxide (HQNO). NQR complex catalyzes the reduction of ubiquinone-1 to ubiquinol by two successive reactions, coupled with the transport of Na(+) ions from the cytoplasm to the periplasm. NqrA to NqrE are probably involved in the second step, the conversion of ubisemiquinone to ubiquinol. The chain is Na(+)-translocating NADH-quinone reductase subunit B from Vibrio alginolyticus.